We begin with the raw amino-acid sequence, 89 residues long: MAVTTDQKAQVVRDYQRAAGDTGSPEVQVALLTARINDLADHFKTHVKDHHSRRGLLRMVSRRRKLLDYLKQNSVESYRTLIERLGLRK.

Belongs to the universal ribosomal protein uS15 family. In terms of assembly, part of the 30S ribosomal subunit. Forms a bridge to the 50S subunit in the 70S ribosome, contacting the 23S rRNA.

Functionally, one of the primary rRNA binding proteins, it binds directly to 16S rRNA where it helps nucleate assembly of the platform of the 30S subunit by binding and bridging several RNA helices of the 16S rRNA. Forms an intersubunit bridge (bridge B4) with the 23S rRNA of the 50S subunit in the ribosome. This chain is Small ribosomal subunit protein uS15, found in Nitrosospira multiformis (strain ATCC 25196 / NCIMB 11849 / C 71).